Here is a 293-residue protein sequence, read N- to C-terminus: Histamine N-methyltransferase A (293 aa).

Residue Glu28 participates in substrate binding. Residues Gly60, Glu89, Gln94, Ser120, and Ile142 each contribute to the S-adenosyl-L-methionine site. Asn283 is a substrate binding site.

It belongs to the class I-like SAM-binding methyltransferase superfamily. HNMT family. In terms of assembly, monomer.

The protein resides in the cytoplasm. It carries out the reaction histamine + S-adenosyl-L-methionine = N(tau)-methylhistamine + S-adenosyl-L-homocysteine + H(+). In terms of biological role, inactivates histamine by N-methylation. Plays an important role in degrading histamine and in regulating the airway response to histamine. In Xenopus laevis (African clawed frog), this protein is Histamine N-methyltransferase A (hnmt-a).